The following is a 188-amino-acid chain: Acireductone dioxygenase (188 aa).

Fe(2+) is bound by residues His97, His99, Glu103, and His141. Ni(2+) contacts are provided by His97, His99, Glu103, and His141.

This sequence belongs to the acireductone dioxygenase (ARD) family. In terms of assembly, monomer. The cofactor is Fe(2+). Ni(2+) serves as cofactor.

The enzyme catalyses 1,2-dihydroxy-5-(methylsulfanyl)pent-1-en-3-one + O2 = 3-(methylsulfanyl)propanoate + CO + formate + 2 H(+). It catalyses the reaction 1,2-dihydroxy-5-(methylsulfanyl)pent-1-en-3-one + O2 = 4-methylsulfanyl-2-oxobutanoate + formate + 2 H(+). It participates in amino-acid biosynthesis; L-methionine biosynthesis via salvage pathway; L-methionine from S-methyl-5-thio-alpha-D-ribose 1-phosphate: step 5/6. Functionally, catalyzes 2 different reactions between oxygen and the acireductone 1,2-dihydroxy-3-keto-5-methylthiopentene (DHK-MTPene) depending upon the metal bound in the active site. Fe-containing acireductone dioxygenase (Fe-ARD) produces formate and 2-keto-4-methylthiobutyrate (KMTB), the alpha-ketoacid precursor of methionine in the methionine recycle pathway. Ni-containing acireductone dioxygenase (Ni-ARD) produces methylthiopropionate, carbon monoxide and formate, and does not lie on the methionine recycle pathway. The chain is Acireductone dioxygenase from Xylella fastidiosa (strain M23).